A 258-amino-acid chain; its full sequence is Ferredoxin--NADP reductase (258 aa).

Positions 2 to 102 (SNLNVERVLS…RKPTGTLVTS (101 aa)) constitute an FAD-binding FR-type domain. Aspartate 17 is a binding site for NADP(+). FAD is bound by residues 51–54 (RAYS), 67–69 (FSI), 74–77 (GPLT), and threonine 117. NADP(+) is bound by residues 144–145 (VR), 181–182 (TR), and arginine 190. 254–258 (AFVEK) contacts FAD.

Belongs to the ferredoxin--NADP reductase type 1 family. Monomer. FAD serves as cofactor.

The enzyme catalyses 2 reduced [2Fe-2S]-[ferredoxin] + NADP(+) + H(+) = 2 oxidized [2Fe-2S]-[ferredoxin] + NADPH. Transports electrons between ferredoxin and NADPH. This Azotobacter vinelandii protein is Ferredoxin--NADP reductase.